The sequence spans 1024 residues: P3N-PIPO polyprotein (1024 aa).

The region spanning R165–Y308 is the Peptidase S30 domain. Catalysis depends on for P1 proteinase activity residues H216, D225, and S259. The Involved in interaction with stylet and aphid transmission signature appears at K360–C363. An Involved in virions binding and aphid transmission motif is present at residues P619–K621. One can recognise a Peptidase C6 domain in the interval M645 to G767. Active-site for helper component proteinase activity residues include C653 and H726.

It belongs to the potyviridae P3N-PIPO polyprotein family. Interacts (via PIPO domain) with host PCaP1 protein; this interaction may help to anchor the movement complex to the plasma membrane from which the complex could move to the plasmodesmata. Potyviral RNA is expressed as two polyproteins which undergo post-translational proteolytic processing. Genome polyprotein is processed by NIa-pro, P1 and HC-pro proteinases resulting in the production of at least ten individual proteins. P3N-PIPO is cleaved by P1 and HC-pro proteinases resulting in the production of three individual proteins. The P1 proteinase and the HC-pro cleave only their respective C-termini autocatalytically.

Its subcellular location is the host cell junction. It is found in the host plasmodesma. It catalyses the reaction Hydrolyzes a Gly-|-Gly bond at its own C-terminus, commonly in the sequence -Tyr-Xaa-Val-Gly-|-Gly, in the processing of the potyviral polyprotein.. In terms of biological role, required for aphid transmission and also has proteolytic activity. Only cleaves a Gly-Gly dipeptide at its own C-terminus. Interacts with virions and aphid stylets. Acts as a suppressor of RNA-mediated gene silencing, also known as post-transcriptional gene silencing (PTGS), a mechanism of plant viral defense that limits the accumulation of viral RNAs. May have RNA-binding activity. Allows efficient cell to cell propagation, by bypassing the host cell wall barrier. Transports viral genome to neighboring plant cells directly through plasmosdesmata, without any budding. This chain is P3N-PIPO polyprotein, found in Plum pox potyvirus (strain D) (PPV).